A 104-amino-acid chain; its full sequence is Replication restart protein PriB (104 aa).

An SSB domain is found at 1–101 (MTNRLTLSGT…LHAEQIELID (101 aa)).

This sequence belongs to the PriB family. Homodimer. Interacts with PriA and DnaT. Component of the replication restart primosome. Primosome assembly occurs via a 'hand-off' mechanism. PriA binds to replication forks, subsequently PriB then DnaT bind; DnaT then displaces ssDNA to generate the helicase loading substrate.

Functionally, involved in the restart of stalled replication forks, which reloads the replicative helicase on sites other than the origin of replication; the PriA-PriB pathway is the major replication restart pathway. During primosome assembly it facilitates complex formation between PriA and DnaT on DNA; stabilizes PriA on DNA. Stimulates the DNA unwinding activity of PriA helicase. The chain is Replication restart protein PriB from Salmonella typhi.